A 447-amino-acid chain; its full sequence is Adenylosuccinate synthetase (447 aa).

GTP is bound by residues 35–41 (GDEGKGK) and 63–65 (GHT). The active-site Proton acceptor is the D36. Residues D36 and G63 each contribute to the Mg(2+) site. IMP contacts are provided by residues 36–39 (DEGK), 61–64 (NAGH), T153, R167, N245, T260, and R324. H64 serves as the catalytic Proton donor. 320–326 (VTTKRKR) provides a ligand contact to substrate. GTP-binding positions include R326, 352–354 (KLD), and 435–437 (GVG).

The protein belongs to the adenylosuccinate synthetase family. Homodimer. Mg(2+) serves as cofactor.

It is found in the cytoplasm. It catalyses the reaction IMP + L-aspartate + GTP = N(6)-(1,2-dicarboxyethyl)-AMP + GDP + phosphate + 2 H(+). Its pathway is purine metabolism; AMP biosynthesis via de novo pathway; AMP from IMP: step 1/2. Its function is as follows. Plays an important role in the de novo pathway and in the salvage pathway of purine nucleotide biosynthesis. Catalyzes the first committed step in the biosynthesis of AMP from IMP. This chain is Adenylosuccinate synthetase, found in Drosophila sechellia (Fruit fly).